The following is a 178-amino-acid chain: Prion-like protein doppel (178 aa).

The first 25 residues, 1–25 (MRKHLGGCWLAIVCVLLFSQLSSVK), serve as a signal peptide directing secretion. Positions 27 to 50 (RGIKHRIKWNRKVLPSTSQVTEAH) are flexible tail. Residues 51 to 154 (TAEIRPGAFI…KHCDFWLERG (104 aa)) form a globular region. 2 cysteine pairs are disulfide-bonded: Cys94–Cys147 and Cys108–Cys142. Asn98 and Asn110 each carry an N-linked (GlcNAc...) asparagine glycan. The tract at residues 124–141 (KQDNKLYQRVLWQLIREL) is cu(2+) binding. Gly154 carries the GPI-anchor amidated glycine lipid modification. Residues 155–178 (AGLQVTLDQPMMLCLLVFIWFIVK) constitute a propeptide, removed in mature form.

The protein belongs to the prion family. In terms of processing, N-glycosylated. Post-translationally, O-glycosylated. In terms of tissue distribution, strongly expressed in testis. Detected at low levels in lymph node, spleen and ovary.

The protein resides in the cell membrane. Required for normal acrosome reaction and for normal male fertility. Can bind Cu(2+). This is Prion-like protein doppel (PRND) from Ovis aries (Sheep).